Here is a 136-residue protein sequence, read N- to C-terminus: Membrane-bound negative regulator YvrL (136 aa).

4 helical membrane-spanning segments follow: residues 18–38 (LLAA…LFSL), 46–66 (AAHV…FEPF), 83–103 (LFIL…AHTT), and 106–126 (LISD…VFLI).

It is found in the cell membrane. Functionally, negatively regulates RNA polymerase sigma factor SigO-dependent transcription. Prevents the expression or secretion of OxdC under nonstress conditions. May act as an anti-sigma factor. This chain is Membrane-bound negative regulator YvrL (yvrL), found in Bacillus subtilis (strain 168).